The primary structure comprises 520 residues: Sterile alpha motif domain-containing protein 3 (520 aa).

Residues 4-71 (WSVEQVCSWL…KYKQNTQGLK (68 aa)) enclose the SAM domain. The tract at residues 85-114 (TEAARDYRDEESSSPARHGEQMPSFYPAEN) is disordered.

The sequence is that of Sterile alpha motif domain-containing protein 3 (SAMD3) from Homo sapiens (Human).